Here is a 311-residue protein sequence, read N- to C-terminus: MKHLISIADLNKSEILGLMDEADRFAEALEGREMKKLPTLRGRTIFTLFYENSTRTRSSFETAGKWMSADVINISASSSSVKKGESLRDTALTLKAVGADAIIMRHPSSGAARQVAGWLDDTAIINAGDGSNQHPTQALLDATTMRNRIGEISGKKVVIVGDILHSRVARSNAQLLTTLGAEVVFVAPPTLVPLGIEHWGAEPDSVRVSYDFDSEIADADVVMMLRVQAERMHGGFFPSHREYATRYGLSQARAERMKEGAIIMHPGPMLRGMEINYDVADAPQTVVLNQVTAGVHVRMAVLFTLLVGEEG.

Carbamoyl phosphate-binding residues include Arg55 and Thr56. Lys83 contributes to the L-aspartate binding site. The carbamoyl phosphate site is built by Arg105, His134, and Gln137. The L-aspartate site is built by Arg167 and Arg226. Carbamoyl phosphate is bound by residues Gly267 and Pro268.

This sequence belongs to the aspartate/ornithine carbamoyltransferase superfamily. ATCase family. Heterododecamer (2C3:3R2) of six catalytic PyrB chains organized as two trimers (C3), and six regulatory PyrI chains organized as three dimers (R2).

It catalyses the reaction carbamoyl phosphate + L-aspartate = N-carbamoyl-L-aspartate + phosphate + H(+). It functions in the pathway pyrimidine metabolism; UMP biosynthesis via de novo pathway; (S)-dihydroorotate from bicarbonate: step 2/3. Functionally, catalyzes the condensation of carbamoyl phosphate and aspartate to form carbamoyl aspartate and inorganic phosphate, the committed step in the de novo pyrimidine nucleotide biosynthesis pathway. The chain is Aspartate carbamoyltransferase catalytic subunit from Corynebacterium jeikeium (strain K411).